We begin with the raw amino-acid sequence, 274 residues long: Shikimate dehydrogenase (NADP(+)) (274 aa).

Residues 15-17 (SKS) and Thr-62 contribute to the shikimate site. Lys-66 serves as the catalytic Proton acceptor. Asp-78 is an NADP(+) binding site. Residues Asn-87 and Asp-102 each coordinate shikimate. NADP(+) contacts are provided by residues 127-131 (GAGGA) and Met-215. Tyr-217 serves as a coordination point for shikimate. Gly-239 lines the NADP(+) pocket.

Belongs to the shikimate dehydrogenase family. In terms of assembly, homodimer.

The catalysed reaction is shikimate + NADP(+) = 3-dehydroshikimate + NADPH + H(+). The protein operates within metabolic intermediate biosynthesis; chorismate biosynthesis; chorismate from D-erythrose 4-phosphate and phosphoenolpyruvate: step 4/7. In terms of biological role, involved in the biosynthesis of the chorismate, which leads to the biosynthesis of aromatic amino acids. Catalyzes the reversible NADPH linked reduction of 3-dehydroshikimate (DHSA) to yield shikimate (SA). The polypeptide is Shikimate dehydrogenase (NADP(+)) (Dechloromonas aromatica (strain RCB)).